The primary structure comprises 239 residues: UPF0502 protein Bcen_5249 (239 aa).

Residues 196–239 (IRGAKGRTEAPRGRSGATQCAGSTDGERTRHRRRRTGRRVLIAS) form a disordered region. A compositionally biased stretch (basic residues) spans 224-233 (TRHRRRRTGR).

The protein belongs to the UPF0502 family.

This is UPF0502 protein Bcen_5249 from Burkholderia orbicola (strain AU 1054).